A 326-amino-acid chain; its full sequence is Ribosomal RNA small subunit methyltransferase H (326 aa).

S-adenosyl-L-methionine contacts are provided by residues 45–47 (GGH), D65, D113, and Q120. Positions 299 to 326 (PSAEEITRNPRSRSARLRAAERIAHDGR) are disordered. Over residues 316–326 (RAAERIAHDGR) the composition is skewed to basic and acidic residues.

This sequence belongs to the methyltransferase superfamily. RsmH family.

The protein localises to the cytoplasm. The enzyme catalyses cytidine(1402) in 16S rRNA + S-adenosyl-L-methionine = N(4)-methylcytidine(1402) in 16S rRNA + S-adenosyl-L-homocysteine + H(+). Functionally, specifically methylates the N4 position of cytidine in position 1402 (C1402) of 16S rRNA. In Thermomicrobium roseum (strain ATCC 27502 / DSM 5159 / P-2), this protein is Ribosomal RNA small subunit methyltransferase H.